Consider the following 422-residue polypeptide: Serine hydroxymethyltransferase (422 aa).

Residues Leu120 and 124–126 contribute to the (6S)-5,6,7,8-tetrahydrofolate site; that span reads GHL. Lys228 is subject to N6-(pyridoxal phosphate)lysine.

Belongs to the SHMT family. Homodimer. Pyridoxal 5'-phosphate serves as cofactor.

It is found in the cytoplasm. It carries out the reaction (6R)-5,10-methylene-5,6,7,8-tetrahydrofolate + glycine + H2O = (6S)-5,6,7,8-tetrahydrofolate + L-serine. The protein operates within one-carbon metabolism; tetrahydrofolate interconversion. It participates in amino-acid biosynthesis; glycine biosynthesis; glycine from L-serine: step 1/1. Functionally, catalyzes the reversible interconversion of serine and glycine with tetrahydrofolate (THF) serving as the one-carbon carrier. This reaction serves as the major source of one-carbon groups required for the biosynthesis of purines, thymidylate, methionine, and other important biomolecules. Also exhibits THF-independent aldolase activity toward beta-hydroxyamino acids, producing glycine and aldehydes, via a retro-aldol mechanism. This chain is Serine hydroxymethyltransferase, found in Actinobacillus succinogenes (strain ATCC 55618 / DSM 22257 / CCUG 43843 / 130Z).